The chain runs to 214 residues: Thymidylate kinase (214 aa).

7–14 (GIEGAGKT) contributes to the ATP binding site.

This sequence belongs to the thymidylate kinase family.

The catalysed reaction is dTMP + ATP = dTDP + ADP. Functionally, phosphorylation of dTMP to form dTDP in both de novo and salvage pathways of dTTP synthesis. This Desulfosudis oleivorans (strain DSM 6200 / JCM 39069 / Hxd3) (Desulfococcus oleovorans) protein is Thymidylate kinase.